A 133-amino-acid polypeptide reads, in one-letter code: MKIKSIRKAVLLLALLTSTSFAAGKNVNVEFRKGHSSAQYSGEIKGYDYDTYTFYAKKGQKVHVSISNEGADTYLFGPGIDDSVDLSRYSPELDSHGQYSLPASGKYELRVLQTRNDARKNKTKKYNVDIQIK.

Positions 1–22 (MKIKSIRKAVLLLALLTSTSFA) are cleaved as a signal peptide.

It is found in the periplasm. Its function is as follows. Inhibits activity of g-type lysozyme, which confers increased lysozyme tolerance to the bacterium. In Escherichia coli (strain K12), this protein is Inhibitor of g-type lysozyme (pliG).